A 243-amino-acid chain; its full sequence is NH(3)-dependent NAD(+) synthetase (243 aa).

31–38 contacts ATP; that stretch reads GVSGGIDS. Aspartate 37 contacts Mg(2+). Arginine 110 is a deamido-NAD(+) binding site. ATP is bound at residue threonine 130. Glutamate 135 provides a ligand contact to Mg(2+). Deamido-NAD(+) is bound by residues lysine 143 and aspartate 150. ATP is bound by residues lysine 159 and serine 181. Position 227–228 (227–228) interacts with deamido-NAD(+); that stretch reads HK.

This sequence belongs to the NAD synthetase family. In terms of assembly, homodimer.

It carries out the reaction deamido-NAD(+) + NH4(+) + ATP = AMP + diphosphate + NAD(+) + H(+). Its pathway is cofactor biosynthesis; NAD(+) biosynthesis; NAD(+) from deamido-NAD(+) (ammonia route): step 1/1. In terms of biological role, catalyzes the ATP-dependent amidation of deamido-NAD to form NAD. Uses ammonia as a nitrogen source. The sequence is that of NH(3)-dependent NAD(+) synthetase from Malacoplasma penetrans (strain HF-2) (Mycoplasma penetrans).